The following is a 166-amino-acid chain: Large ribosomal subunit protein uL10 (166 aa).

Belongs to the universal ribosomal protein uL10 family. As to quaternary structure, part of the ribosomal stalk of the 50S ribosomal subunit. The N-terminus interacts with L11 and the large rRNA to form the base of the stalk. The C-terminus forms an elongated spine to which L12 dimers bind in a sequential fashion forming a multimeric L10(L12)X complex.

Functionally, forms part of the ribosomal stalk, playing a central role in the interaction of the ribosome with GTP-bound translation factors. The protein is Large ribosomal subunit protein uL10 of Listeria innocua serovar 6a (strain ATCC BAA-680 / CLIP 11262).